We begin with the raw amino-acid sequence, 332 residues long: Tryptophan--tRNA ligase (332 aa).

ATP-binding positions include 11-13 and 19-20; these read TST and GN. Residues 12–20 carry the 'HIGH' region motif; it reads STGKLTLGN. Residue Asp-140 coordinates L-tryptophan. ATP contacts are provided by residues 152–154, Ile-191, and 200–204; these read GQD and KMSKS. Positions 200-204 match the 'KMSKS' region motif; sequence KMSKS.

This sequence belongs to the class-I aminoacyl-tRNA synthetase family. Homodimer.

The protein resides in the cytoplasm. The catalysed reaction is tRNA(Trp) + L-tryptophan + ATP = L-tryptophyl-tRNA(Trp) + AMP + diphosphate + H(+). Catalyzes the attachment of tryptophan to tRNA(Trp). This Mycoplasmopsis pulmonis (strain UAB CTIP) (Mycoplasma pulmonis) protein is Tryptophan--tRNA ligase.